Consider the following 169-residue polypeptide: Sorting nexin-24 (169 aa).

Met-1 is subject to N-acetylmethionine. Residues 1–125 (MEVYIPSFRY…SFDETESEES (125 aa)) form the PX domain. Residues Arg-38, Ser-40, Lys-61, and Arg-74 each contribute to the a 1,2-diacyl-sn-glycero-3-phospho-(1D-myo-inositol-3-phosphate) site. A phosphoserine mark is found at Ser-113 and Ser-116.

Belongs to the sorting nexin family.

Its subcellular location is the cytoplasmic vesicle membrane. In terms of biological role, may be involved in several stages of intracellular trafficking. The sequence is that of Sorting nexin-24 (SNX24) from Bos taurus (Bovine).